A 621-amino-acid chain; its full sequence is Chaperone protein DnaK (621 aa).

The residue at position 175 (Thr-175) is a Phosphothreonine; by autocatalysis. Basic and acidic residues predominate over residues 499–516 (EAHEADDKKRKEDAETRN). 2 disordered regions span residues 499–520 (EAHE…NAEN) and 583–621 (AQQG…KDNK). The span at 583-602 (AQQGAEGAAGAADSGSANNG) shows a compositional bias: low complexity. A compositionally biased stretch (acidic residues) spans 603-621 (GDDDVVDAEVVDDDDKDNK).

This sequence belongs to the heat shock protein 70 family.

Functionally, acts as a chaperone. This is Chaperone protein DnaK from Bifidobacterium animalis subsp. lactis (strain AD011).